Here is a 156-residue protein sequence, read N- to C-terminus: Putative pre-16S rRNA nuclease (156 aa).

This sequence belongs to the YqgF nuclease family.

The protein localises to the cytoplasm. In terms of biological role, could be a nuclease involved in processing of the 5'-end of pre-16S rRNA. This chain is Putative pre-16S rRNA nuclease, found in Aromatoleum aromaticum (strain DSM 19018 / LMG 30748 / EbN1) (Azoarcus sp. (strain EbN1)).